The following is a 289-amino-acid chain: Protein charybde (289 aa).

Positions 119-142 (TAHHPGHGHGPGPSPMPASPLQST) are disordered.

Belongs to the DDIT4 family.

It localises to the cytoplasm. Functionally, inhibits cell growth by regulating the Tor pathway upstream of the Tsc1-Tsc2 complex and downstream of Akt1. Acts as a cell death activator during head development. This is Protein charybde (chrb) from Drosophila pseudoobscura pseudoobscura (Fruit fly).